The primary structure comprises 295 residues: Glutamate 5-kinase (295 aa).

ATP is bound at residue Lys9. Ser49, Asp136, and Asn148 together coordinate substrate. ATP-binding positions include 168 to 169 (TD) and 210 to 216 (TGGMLTK).

It belongs to the glutamate 5-kinase family.

It localises to the cytoplasm. The enzyme catalyses L-glutamate + ATP = L-glutamyl 5-phosphate + ADP. The protein operates within amino-acid biosynthesis; L-proline biosynthesis; L-glutamate 5-semialdehyde from L-glutamate: step 1/2. In terms of biological role, catalyzes the transfer of a phosphate group to glutamate to form L-glutamate 5-phosphate. The chain is Glutamate 5-kinase from Neisseria gonorrhoeae (strain NCCP11945).